The chain runs to 600 residues: Glutamine--fructose-6-phosphate aminotransferase [isomerizing] (600 aa).

The active-site Nucleophile; for GATase activity is Cys-2. Residues 2-217 form the Glutamine amidotransferase type-2 domain; it reads CGIVGYIGNE…DEELVIVRRD (216 aa). SIS domains follow at residues 283 to 422 and 452 to 590; these read IRAA…AAGK and IARD…VDKP. Catalysis depends on Lys-595, which acts as the For Fru-6P isomerization activity.

As to quaternary structure, homodimer.

It is found in the cytoplasm. It catalyses the reaction D-fructose 6-phosphate + L-glutamine = D-glucosamine 6-phosphate + L-glutamate. In terms of biological role, catalyzes the first step in hexosamine metabolism, converting fructose-6P into glucosamine-6P using glutamine as a nitrogen source. The protein is Glutamine--fructose-6-phosphate aminotransferase [isomerizing] of Shouchella clausii (strain KSM-K16) (Alkalihalobacillus clausii).